We begin with the raw amino-acid sequence, 517 residues long: Cytochrome P450 11B, mitochondrial (517 aa).

The N-terminal 45 residues, 1-45 (MLEKTAARQIGSCLMRCRTLDTTSPLWTGFSRLSTAPLIHEARED), are a transit peptide targeting the mitochondrion. C465 is a binding site for heme.

The protein belongs to the cytochrome P450 family. Requires heme as cofactor.

Its subcellular location is the mitochondrion membrane. It carries out the reaction a steroid + 2 reduced [adrenodoxin] + O2 + 2 H(+) = an 11beta-hydroxysteroid + 2 oxidized [adrenodoxin] + H2O. In terms of biological role, has 11 beta-hydroxylation, 18-hydroxylation activities and aldosterone synthetic activity. Catalyzes the final steps of glucocorticoid and mineralocorticoid biosynthesis. The chain is Cytochrome P450 11B, mitochondrial (CYP11B) from Aquarana catesbeiana (American bullfrog).